Reading from the N-terminus, the 191-residue chain is Peptide methionine sulfoxide reductase (191 aa).

Disordered stretches follow at residues 1–20 (MASS…TPEN) and 168–191 (EKGG…KCYG).

This sequence belongs to the MsrA Met sulfoxide reductase family.

It catalyses the reaction L-methionyl-[protein] + [thioredoxin]-disulfide + H2O = L-methionyl-(S)-S-oxide-[protein] + [thioredoxin]-dithiol. The enzyme catalyses [thioredoxin]-disulfide + L-methionine + H2O = L-methionine (S)-S-oxide + [thioredoxin]-dithiol. Has an important function as a repair enzyme for proteins that have been inactivated by oxidation. Catalyzes the reversible oxidation-reduction of methionine sulfoxide in proteins to methionine. The polypeptide is Peptide methionine sulfoxide reductase (Fragaria ananassa (Strawberry)).